The chain runs to 244 residues: Ubiquinone biosynthesis O-methyltransferase (244 aa).

Residues arginine 36, glycine 60, aspartate 81, and leucine 123 each coordinate S-adenosyl-L-methionine.

This sequence belongs to the methyltransferase superfamily. UbiG/COQ3 family.

The enzyme catalyses a 3-demethylubiquinol + S-adenosyl-L-methionine = a ubiquinol + S-adenosyl-L-homocysteine + H(+). The catalysed reaction is a 3-(all-trans-polyprenyl)benzene-1,2-diol + S-adenosyl-L-methionine = a 2-methoxy-6-(all-trans-polyprenyl)phenol + S-adenosyl-L-homocysteine + H(+). Its pathway is cofactor biosynthesis; ubiquinone biosynthesis. O-methyltransferase that catalyzes the 2 O-methylation steps in the ubiquinone biosynthetic pathway. The protein is Ubiquinone biosynthesis O-methyltransferase of Rickettsia felis (strain ATCC VR-1525 / URRWXCal2) (Rickettsia azadi).